The sequence spans 823 residues: Leucine--tRNA ligase (823 aa).

A 'HIGH' region motif is present at residues 42 to 52 (PYPSGTLHMGH). The short motif at 575-579 (KMSKS) is the 'KMSKS' region element. Lys-578 provides a ligand contact to ATP.

The protein belongs to the class-I aminoacyl-tRNA synthetase family.

It localises to the cytoplasm. The catalysed reaction is tRNA(Leu) + L-leucine + ATP = L-leucyl-tRNA(Leu) + AMP + diphosphate. The chain is Leucine--tRNA ligase from Legionella pneumophila (strain Paris).